The sequence spans 258 residues: Imidazole glycerol phosphate synthase subunit HisF (258 aa).

Residues Asp-11 and Asp-130 contribute to the active site.

The protein belongs to the HisA/HisF family. As to quaternary structure, heterodimer of HisH and HisF.

It localises to the cytoplasm. The enzyme catalyses 5-[(5-phospho-1-deoxy-D-ribulos-1-ylimino)methylamino]-1-(5-phospho-beta-D-ribosyl)imidazole-4-carboxamide + L-glutamine = D-erythro-1-(imidazol-4-yl)glycerol 3-phosphate + 5-amino-1-(5-phospho-beta-D-ribosyl)imidazole-4-carboxamide + L-glutamate + H(+). The protein operates within amino-acid biosynthesis; L-histidine biosynthesis; L-histidine from 5-phospho-alpha-D-ribose 1-diphosphate: step 5/9. IGPS catalyzes the conversion of PRFAR and glutamine to IGP, AICAR and glutamate. The HisF subunit catalyzes the cyclization activity that produces IGP and AICAR from PRFAR using the ammonia provided by the HisH subunit. The sequence is that of Imidazole glycerol phosphate synthase subunit HisF from Haemophilus influenzae (strain 86-028NP).